We begin with the raw amino-acid sequence, 63 residues long: Large ribosomal subunit protein bL28 (63 aa).

The protein belongs to the bacterial ribosomal protein bL28 family.

The polypeptide is Large ribosomal subunit protein bL28 (Mycoplasmopsis synoviae (strain 53) (Mycoplasma synoviae)).